A 479-amino-acid polypeptide reads, in one-letter code: Phosphoglycerate kinase, glycosomal (479 aa).

(2R)-3-phosphoglycerate-binding residues include valine 23, aspartate 24, phenylalanine 25, asparagine 26, arginine 39, serine 61, histidine 62, glycine 64, arginine 65, arginine 132, histidine 168, and arginine 169. Residues glycine 214 and alanine 215 each contribute to the ADP site. Residue glycine 214 coordinates CDP. Alanine 215 and lysine 216 together coordinate AMP. Position 215 (alanine 215) interacts with ATP. Alanine 215 lines the Mg(2+) pocket. Position 216 (lysine 216) interacts with (2R)-3-phosphoglycerate. Aspartate 219 serves as a coordination point for CDP. Aspartate 219 provides a ligand contact to Mg(2+). Positions 220 and 238 each coordinate ADP. Position 220 (lysine 220) interacts with AMP. Lysine 220 is a binding site for ATP. Residue glycine 238 coordinates CDP. AMP is bound by residues alanine 239 and alanine 311. 2 residues coordinate ATP: alanine 239 and alanine 311. Alanine 311 and asparagine 335 together coordinate ADP. The CDP site is built by glycine 336 and phenylalanine 341. ADP is bound by residues phenylalanine 341, glutamate 342, aspartate 374, and threonine 375. Glutamate 342 is a binding site for AMP. Residues glutamate 342, aspartate 374, and threonine 375 each coordinate ATP. Aspartate 374 provides a ligand contact to Mg(2+).

The protein belongs to the phosphoglycerate kinase family. In terms of assembly, monomer. Mg(2+) is required as a cofactor.

The protein localises to the glycosome. The enzyme catalyses (2R)-3-phosphoglycerate + ATP = (2R)-3-phospho-glyceroyl phosphate + ADP. It participates in carbohydrate degradation; glycolysis; pyruvate from D-glyceraldehyde 3-phosphate: step 2/5. The sequence is that of Phosphoglycerate kinase, glycosomal (PGKC) from Leishmania mexicana.